The chain runs to 155 residues: Small ribosomal subunit protein uS7 (155 aa).

It belongs to the universal ribosomal protein uS7 family. In terms of assembly, part of the 30S ribosomal subunit. Contacts proteins S9 and S11.

In terms of biological role, one of the primary rRNA binding proteins, it binds directly to 16S rRNA where it nucleates assembly of the head domain of the 30S subunit. Is located at the subunit interface close to the decoding center, probably blocks exit of the E-site tRNA. The chain is Small ribosomal subunit protein uS7 from Corynebacterium efficiens (strain DSM 44549 / YS-314 / AJ 12310 / JCM 11189 / NBRC 100395).